We begin with the raw amino-acid sequence, 91 residues long: Cell division topological specificity factor (91 aa).

The protein belongs to the MinE family.

In terms of biological role, prevents the cell division inhibition by proteins MinC and MinD at internal division sites while permitting inhibition at polar sites. This ensures cell division at the proper site by restricting the formation of a division septum at the midpoint of the long axis of the cell. The sequence is that of Cell division topological specificity factor from Bradyrhizobium sp. (strain BTAi1 / ATCC BAA-1182).